A 195-amino-acid polypeptide reads, in one-letter code: Imidazoleglycerol-phosphate dehydratase (195 aa).

This sequence belongs to the imidazoleglycerol-phosphate dehydratase family.

It is found in the cytoplasm. It catalyses the reaction D-erythro-1-(imidazol-4-yl)glycerol 3-phosphate = 3-(imidazol-4-yl)-2-oxopropyl phosphate + H2O. The protein operates within amino-acid biosynthesis; L-histidine biosynthesis; L-histidine from 5-phospho-alpha-D-ribose 1-diphosphate: step 6/9. This chain is Imidazoleglycerol-phosphate dehydratase, found in Trichlorobacter lovleyi (strain ATCC BAA-1151 / DSM 17278 / SZ) (Geobacter lovleyi).